The sequence spans 293 residues: Heterogeneous nuclear ribonucleoprotein C-like 1 (293 aa).

Residues 16–87 form the RRM domain; the sequence is SRVFIGNLNT…QVVDINLAAE (72 aa). Disordered regions lie at residues 137–177 and 206–293; these read ALAV…KLKG and KEQS…QDDS. Positions 177 to 225 form a coiled coil; sequence GDDLQAIKQELTQIKQKVDSLLENLEKIEKEQSKQEVEVKNAKSEEEQS. Basic and acidic residues-rich tracts occupy residues 206–222 and 229–240; these read KEQS…KSEE and MKKDETHVKMES. Composition is skewed to acidic residues over residues 242–267 and 275–284; these read GGAE…DDQL and KEAEEGEDDR.

This sequence belongs to the RRM HNRPC family. RALY subfamily.

The protein resides in the nucleus. Functionally, may play a role in nucleosome assembly by neutralizing basic proteins such as A and B core hnRNPs. This chain is Heterogeneous nuclear ribonucleoprotein C-like 1 (HNRNPCL1), found in Homo sapiens (Human).